We begin with the raw amino-acid sequence, 173 residues long: RNA pyrophosphohydrolase (173 aa).

The Nudix hydrolase domain occupies 6–149; sequence GFRANVGIII…KRDVYRKVMK (144 aa). Positions 38–59 match the Nudix box motif; the sequence is GGVDDGESAEEAMYRELYEEVG.

Belongs to the Nudix hydrolase family. RppH subfamily. A divalent metal cation serves as cofactor.

In terms of biological role, accelerates the degradation of transcripts by removing pyrophosphate from the 5'-end of triphosphorylated RNA, leading to a more labile monophosphorylated state that can stimulate subsequent ribonuclease cleavage. The chain is RNA pyrophosphohydrolase from Shewanella pealeana (strain ATCC 700345 / ANG-SQ1).